We begin with the raw amino-acid sequence, 737 residues long: Polyribonucleotide nucleotidyltransferase (737 aa).

D489 and D495 together coordinate Mg(2+). The KH domain maps to 556-615 (PKIDTIKIDVDKIKIVIGKGGETIDKIIAETGVKIDIDEEGNVSIYSSDQDAINRAKEII). The S1 motif domain maps to 625-693 (DEVYRAKVVR…EKGRVDASMK (69 aa)). The interval 691 to 737 (SMKALLPRPPKPERDEKGEKSERPYRPRHHKDHKPKKEITETPKDSE) is disordered. Basic and acidic residues-rich tracts occupy residues 700–715 (PKPE…ERPY) and 725–737 (PKKE…KDSE).

Belongs to the polyribonucleotide nucleotidyltransferase family. It depends on Mg(2+) as a cofactor.

Its subcellular location is the cytoplasm. The enzyme catalyses RNA(n+1) + phosphate = RNA(n) + a ribonucleoside 5'-diphosphate. Functionally, involved in mRNA degradation. Catalyzes the phosphorolysis of single-stranded polyribonucleotides processively in the 3'- to 5'-direction. The chain is Polyribonucleotide nucleotidyltransferase from Streptococcus pneumoniae (strain Hungary19A-6).